The following is a 377-amino-acid chain: Probable trehalose-phosphate phosphatase G (377 aa).

The disordered stretch occupies residues 1-20 (MDLNINKTTPVLSDPTTPVS).

The protein belongs to the trehalose phosphatase family. A divalent metal cation is required as a cofactor.

It catalyses the reaction alpha,alpha-trehalose 6-phosphate + H2O = alpha,alpha-trehalose + phosphate. It functions in the pathway glycan biosynthesis; trehalose biosynthesis. Its function is as follows. Removes the phosphate from trehalose 6-phosphate to produce free trehalose. Trehalose accumulation in plant may improve abiotic stress tolerance. The sequence is that of Probable trehalose-phosphate phosphatase G (TPPG) from Arabidopsis thaliana (Mouse-ear cress).